Reading from the N-terminus, the 314-residue chain is Olfactory receptor 5P62 (314 aa).

Topologically, residues 1-28 (MAFIYNGSQTTVTEFILLGLTDDPVLKV) are extracellular. N-linked (GlcNAc...) asparagine glycosylation is present at N6. Residues 29-49 (ILFCIILCIYLVTVFGNLSTI) traverse the membrane as a helical segment. The Cytoplasmic segment spans residues 50-57 (LLIGVSSK). Residues 58–78 (LHHPMYFFLSHLASVDMGLSS) form a helical membrane-spanning segment. At 79–102 (SVTPNMLVNFLTEKNTISYLGCGI) the chain is on the extracellular side. Residues C100 and C192 are joined by a disulfide bond. The chain crosses the membrane as a helical span at residues 103–123 (QLSSAAFFGAVEFFLLAAMAY). Topologically, residues 124–136 (DRLVAICNPLLYS) are cytoplasmic. A helical transmembrane segment spans residues 137 to 157 (TKMSSQVCIQLVAGSYVGGFL). Over 158–199 (NASFVTHFFFSFLFCGPNRVNHFFCDLSPMMELSCSDVSISE) the chain is Extracellular. Residues 200-220 (IVISFSAGSFTMTTLFVIVIP) form a helical membrane-spanning segment. Over 221–240 (YFYIFITILKIRSTEGRQKA) the chain is Cytoplasmic. A helical membrane pass occupies residues 241 to 261 (FSTCTSHLTAVTLYYGTIIFI). The Extracellular segment spans residues 262-274 (YVMPKSTYSRDQN). The helical transmembrane segment at 275–295 (KVVSLFYMLVIPVLNPLIYSL) threads the bilayer. Residues 296–314 (RNNEIKDALKRQFYRKTLL) lie on the Cytoplasmic side of the membrane.

Belongs to the G-protein coupled receptor 1 family.

Its subcellular location is the cell membrane. Functionally, potential odorant receptor. This is Olfactory receptor 5P62 from Mus musculus (Mouse).